Reading from the N-terminus, the 157-residue chain is Ribosome maturation factor RimP (157 aa).

This sequence belongs to the RimP family.

The protein localises to the cytoplasm. In terms of biological role, required for maturation of 30S ribosomal subunits. This chain is Ribosome maturation factor RimP, found in Geobacillus sp. (strain WCH70).